Reading from the N-terminus, the 248-residue chain is Opiorphin prepropeptide (248 aa).

An N-terminal signal peptide occupies residues 1–21 (MKLTFFLGLLALISCFTPSES). Gln-22 bears the Pyrrolidone carboxylic acid mark. Positions 150–198 (DTTITTNPPTTATATTSTSTKPTMTISSSTVPISSTPEPATSISAATPA) are disordered. Asn-218 carries an N-linked (GlcNAc...) asparagine glycan.

The protein belongs to the PROL1/PROL3 family. As to expression, abundantly expressed in lacrimal gland where it found in the secretory endpieces. Also expressed at modest levels in the submandibular gland.

The protein resides in the secreted. In terms of biological role, opiorphin is an endogenous inhibitor of neprilysin and aminopeptidase N. Inhibits the breakdown of substance P, Mca-BK2 and Met-enkephalin by neprilysin in vitro with IC(50) values of 29 uM, 33 uM and 33 uM respectively. Inhibits the breakdown of Ala-pNA by aminopeptidase N in vitro with an IC(50) of 65 uM. Has a potent analgesic effect when administered to rats by intravenous injection. In Homo sapiens (Human), this protein is Opiorphin prepropeptide.